Here is a 54-residue protein sequence, read N- to C-terminus: Putative ankyrin repeat protein RC0701 (54 aa).

The stretch at 17-46 (SGKTPLDWYSDYNATKIVETLIKNGGNVSS) is one ANK repeat.

In Rickettsia conorii (strain ATCC VR-613 / Malish 7), this protein is Putative ankyrin repeat protein RC0701.